The sequence spans 200 residues: Peptidyl-tRNA hydrolase (200 aa).

Tyrosine 14 serves as a coordination point for tRNA. Histidine 19 (proton acceptor) is an active-site residue. TRNA contacts are provided by phenylalanine 64, asparagine 66, and asparagine 112.

It belongs to the PTH family. Monomer.

The protein localises to the cytoplasm. It catalyses the reaction an N-acyl-L-alpha-aminoacyl-tRNA + H2O = an N-acyl-L-amino acid + a tRNA + H(+). Hydrolyzes ribosome-free peptidyl-tRNAs (with 1 or more amino acids incorporated), which drop off the ribosome during protein synthesis, or as a result of ribosome stalling. Functionally, catalyzes the release of premature peptidyl moieties from peptidyl-tRNA molecules trapped in stalled 50S ribosomal subunits, and thus maintains levels of free tRNAs and 50S ribosomes. The chain is Peptidyl-tRNA hydrolase from Maricaulis maris (strain MCS10) (Caulobacter maris).